Reading from the N-terminus, the 464-residue chain is tRNA-2-methylthio-N(6)-dimethylallyladenosine synthase (464 aa).

Residues 19–135 (GSYWITTFGC…LENLLERVDS (117 aa)) enclose the MTTase N-terminal domain. Cysteine 28, cysteine 64, cysteine 98, cysteine 170, cysteine 174, and cysteine 177 together coordinate [4Fe-4S] cluster. Residues 156 to 393 (RDSTICGWVN…NELVEATSRK (238 aa)) form the Radical SAM core domain. A TRAM domain is found at 396-464 (QRYLNNTESV…SFSLSGQIYK (69 aa)).

This sequence belongs to the methylthiotransferase family. MiaB subfamily. As to quaternary structure, monomer. [4Fe-4S] cluster serves as cofactor.

The protein resides in the cytoplasm. The catalysed reaction is N(6)-dimethylallyladenosine(37) in tRNA + (sulfur carrier)-SH + AH2 + 2 S-adenosyl-L-methionine = 2-methylsulfanyl-N(6)-dimethylallyladenosine(37) in tRNA + (sulfur carrier)-H + 5'-deoxyadenosine + L-methionine + A + S-adenosyl-L-homocysteine + 2 H(+). Catalyzes the methylthiolation of N6-(dimethylallyl)adenosine (i(6)A), leading to the formation of 2-methylthio-N6-(dimethylallyl)adenosine (ms(2)i(6)A) at position 37 in tRNAs that read codons beginning with uridine. In Prochlorococcus marinus (strain MIT 9515), this protein is tRNA-2-methylthio-N(6)-dimethylallyladenosine synthase.